The primary structure comprises 359 residues: F-box protein At5g49610 (359 aa).

Residues 3–52 (NQKGALFPDEVILQILARLPVKSLFRFKSVCKSWYRLPSDKYFTSLFNQL) enclose the F-box domain.

As to quaternary structure, part of a SCF (SKP1-cullin-F-box) protein ligase complex. Interacts with SKP1A, SKP1B, ASK11, ASK12, ASK13 and ASK14.

Its pathway is protein modification; protein ubiquitination. This is F-box protein At5g49610 from Arabidopsis thaliana (Mouse-ear cress).